The primary structure comprises 303 residues: MKCNACWRELEGQAVSTTCGHLLCTEDAKKILSNDAACPICDQVLSKSHMRPVDTNPNDDWTNMSMAGVSPQILMKSAYRSVMFYIGQKELEMQYKMNRIVGQCRQKCELMQAKFTEKLEEVHTAYQKMAKKCQLMEQEVENLSRDKQELQEKFAEKSRQKRKLDEMYDQLRSEYESAKRSAIQPANNYFPRAQPDLFSGVPNIMDSSDPLRQGLAGLPETPGRRDEGWAPPPRQRRSTSGPFELSAGSPAHNAAPPVDIRPRQPARPVFGTAMNNTSAALRNMIISPVKRPQLSRNRPHMFT.

The segment at 3-42 (CNACWRELEGQAVSTTCGHLLCTEDAKKILSNDAACPICD) adopts an RING-type; degenerate zinc-finger fold. A coiled-coil region spans residues 119–184 (LEEVHTAYQK…YESAKRSAIQ (66 aa)). Residues 201 to 268 (VPNIMDSSDP…DIRPRQPARP (68 aa)) form a disordered region.

As to quaternary structure, interacts with ZIP4 and PTD. As to expression, expressed in young panicles.

Its subcellular location is the nucleus. The protein localises to the chromosome. It catalyses the reaction S-ubiquitinyl-[E2 ubiquitin-conjugating enzyme]-L-cysteine + [acceptor protein]-L-lysine = [E2 ubiquitin-conjugating enzyme]-L-cysteine + N(6)-ubiquitinyl-[acceptor protein]-L-lysine.. It functions in the pathway protein modification; protein ubiquitination. In terms of biological role, ubiquitin E3 ligase required for class I crossover (CO) formation during meiosis. This Oryza sativa subsp. japonica (Rice) protein is E3 ubiquitin-protein ligase CCNB1IP1 homolog.